The sequence spans 147 residues: uncharacterized protein (147 aa).

The tract at residues 23-48 is disordered; the sequence is EEVSQPEPNTANDSSTEYKGKSKDDF. Positions 28–37 are enriched in polar residues; that stretch reads PEPNTANDSS. Basic and acidic residues predominate over residues 38–48; it reads TEYKGKSKDDF. The chain crosses the membrane as a helical span at residues 85–105; sequence LMFCIIACSFICAIQFLFFII.

The protein resides in the membrane. This is an uncharacterized protein from Saccharomyces cerevisiae (strain ATCC 204508 / S288c) (Baker's yeast).